The chain runs to 245 residues: MTPEGRALLLAGAAELGLELSAEHLDRFARLLVRLTEGSAQLNLTALHQERDIVLKHFVDSLTCLRGGWLDGAARVLDLGTGAGFPALPLAIVRPDLQLVALDATRKKVDFVERTARSLELNHVQPLTGRAETLGRDPAQRESYDRVVTRAVAALPILAELTLPFLRMGGFLLAQKGPIGPEELEAGTRAAQEVGGEIRAIDAFVLPVAGDARTLVVVEKTAPTPERYPRREGVPNRKPLFWRAT.

S-adenosyl-L-methionine contacts are provided by residues Gly80, Phe85, 103–105 (DAT), 131–132 (AE), and Arg150.

The protein belongs to the methyltransferase superfamily. RNA methyltransferase RsmG family.

It localises to the cytoplasm. Specifically methylates the N7 position of a guanine in 16S rRNA. This Deinococcus geothermalis (strain DSM 11300 / CIP 105573 / AG-3a) protein is Ribosomal RNA small subunit methyltransferase G.